Reading from the N-terminus, the 503-residue chain is Glycoprotein 3-alpha-L-fucosyltransferase A (503 aa).

Residues 1–10 (MRRPKISLKK) are Cytoplasmic-facing. Residues 11-28 (YFYLTLICALLLIFGFSL) form a helical; Signal-anchor for type II membrane protein membrane-spanning segment. The Lumenal segment spans residues 29–503 (KEREIWKTLS…KDVISDSSDD (475 aa)). Residues 44 to 71 (ITTQQQQHQHLHQLQSMDEEHPMATSST) are disordered. Low complexity predominate over residues 47 to 58 (QQQQHQHLHQLQ). N262, N295, and N299 each carry an N-linked (GlcNAc...) asparagine glycan.

This sequence belongs to the glycosyltransferase 10 family. Mn(2+) serves as cofactor.

Its subcellular location is the golgi apparatus. The protein localises to the golgi stack membrane. The enzyme catalyses N(4)-{beta-D-GlcNAc-(1-&gt;2)-alpha-D-Man-(1-&gt;3)-[beta-D-GlcNAc-(1-&gt;2)-alpha-D-Man-(1-&gt;6)]-beta-D-Man-(1-&gt;4)-beta-D-GlcNAc-(1-&gt;4)-beta-D-GlcNAc}-L-asparaginyl-[protein] + GDP-beta-L-fucose = N(4)-{beta-D-GlcNAc-(1-&gt;2)-alpha-D-Man-(1-&gt;3)-[beta-D-GlcNAc-(1-&gt;2)-alpha-D-Man-(1-&gt;6)]-beta-D-Man-(1-&gt;4)-beta-D-GlcNAc-(1-&gt;4)-[alpha-L-Fuc(1-&gt;3)]-beta-D-GlcNAc}-L-asparaginyl-[protein] + GDP + H(+). Its pathway is protein modification; protein glycosylation. Its function is as follows. Catalyzes alpha-1,3 glycosidic linkages of N-glycans. Plays a role in neuronal development by promoting ventral nerve cord formation, possibly by promoting interactions between migrating cells and the extracellular matrix or by promoting neural activity. This chain is Glycoprotein 3-alpha-L-fucosyltransferase A (FucTA), found in Drosophila melanogaster (Fruit fly).